Reading from the N-terminus, the 251-residue chain is Maleate isomerase (251 aa).

Substrate contacts are provided by residues asparagine 15, 81–83, tyrosine 138, and asparagine 168; that span reads CLV. The active-site Nucleophile is the cysteine 81. Residue cysteine 81 is modified to S-(2-succinyl)cysteine. Catalysis depends on cysteine 199, which acts as the Proton donor. 200 to 201 contributes to the substrate binding site; it reads VQ.

It belongs to the maleate isomerase family. As to quaternary structure, homodimer.

The enzyme catalyses maleate = fumarate. In terms of biological role, catalyzes cis-trans isomerization of the C2-C3 double bond in maleate to yield fumarate. This Geobacillus stearothermophilus (Bacillus stearothermophilus) protein is Maleate isomerase.